The primary structure comprises 493 residues: Probable cytosol aminopeptidase (493 aa).

Positions 257 and 262 each coordinate Mn(2+). Lys269 is an active-site residue. Asp281, Asp341, and Glu343 together coordinate Mn(2+). Arg345 is a catalytic residue.

It belongs to the peptidase M17 family. Requires Mn(2+) as cofactor.

It is found in the cytoplasm. It carries out the reaction Release of an N-terminal amino acid, Xaa-|-Yaa-, in which Xaa is preferably Leu, but may be other amino acids including Pro although not Arg or Lys, and Yaa may be Pro. Amino acid amides and methyl esters are also readily hydrolyzed, but rates on arylamides are exceedingly low.. It catalyses the reaction Release of an N-terminal amino acid, preferentially leucine, but not glutamic or aspartic acids.. In terms of biological role, presumably involved in the processing and regular turnover of intracellular proteins. Catalyzes the removal of unsubstituted N-terminal amino acids from various peptides. The sequence is that of Probable cytosol aminopeptidase from Prochlorococcus marinus (strain MIT 9211).